A 405-amino-acid polypeptide reads, in one-letter code: 8-amino-7-oxononanoate synthase 2 (405 aa).

Arginine 20 is a binding site for substrate. Pyridoxal 5'-phosphate is bound at residue 116–117 (GY). A substrate-binding site is contributed by histidine 141. Pyridoxal 5'-phosphate contacts are provided by serine 187, histidine 215, and threonine 243. N6-(pyridoxal phosphate)lysine is present on lysine 246. Threonine 369 contributes to the substrate binding site.

This sequence belongs to the class-II pyridoxal-phosphate-dependent aminotransferase family. BioF subfamily. Homodimer. It depends on pyridoxal 5'-phosphate as a cofactor.

The catalysed reaction is 6-carboxyhexanoyl-[ACP] + L-alanine + H(+) = (8S)-8-amino-7-oxononanoate + holo-[ACP] + CO2. The protein operates within cofactor biosynthesis; biotin biosynthesis. In terms of biological role, catalyzes the decarboxylative condensation of pimeloyl-[acyl-carrier protein] and L-alanine to produce 8-amino-7-oxononanoate (AON), [acyl-carrier protein], and carbon dioxide. This Polaromonas sp. (strain JS666 / ATCC BAA-500) protein is 8-amino-7-oxononanoate synthase 2.